We begin with the raw amino-acid sequence, 421 residues long: MAAISRAIKQELLEDLKPEMYLPPKSTRRRAKVKTEEKVDVKTLVKSKSKKRRAAKNELEENVEFVRRFAPRRPYQWRGRQVRALPRPGIPVVFTPGQRSGVASKRSYDEVYADEDVLDQSGNMINEFAYGKRVKMLTHKNPTPSQVPITPQEPIARPGEAGLLPTVQVLAPRDSKHETMLPVTKSEGGDVKVENKGFEQITPQLGVQTVDIKVPVKRKSEVEDEILKRAKMEPFETTVKMEYSEQPQVEVFDTGVEPSSFFEVRSQARPIAVARKRRVPTVEVMEVQQSDHTAPTASAAPVANVIVGPHLSRRPSRWGPANAIYPDYVYHPSISAKKTMGPRPTGRVSRWGPANSIFPEVRLHPSMVSAVTRAAPRKSTKSRRRRRVRTRRAFVLPAGTKTGVMLPQNIRYHPSILFRRA.

The protein belongs to the adenoviridae core-capsid bridging protein family. Monomer. Homodimer. Exists in equilibrium between monomers and dimers in solution. Interacts with the histone-like nucleoprotein; this interactions bridge the virus core to the capsid. Interacts with core protein X; this interactions bridge the virus core to the capsid. Interacts with the endosome lysis protein VI; this interactions bridge the virus core to the capsid. Interacts with the peripentonal hexons. Interacts with host NPM1; this interaction might play a role in virus assembly.

Its subcellular location is the virion. It is found in the host nucleus. The protein localises to the host nucleolus. Its function is as follows. Associates loosely with the viral DNA to form an outer shell around the nucleoprotein-DNA complex and links it with the capsid by binding the endosome lysis protein. Dissociates from the viral genome during entry. Might be involved in nuclear capsid assembly of the viral particles through its association with NPM1/nucleophosmin. This chain is Core-capsid bridging protein, found in Canine adenovirus serotype 1 (strain CLL) (CAdV-1).